The sequence spans 295 residues: GTPase Era (295 aa).

The 168-residue stretch at 3–170 (KSGFVTIVGR…VDLMKTELPE (168 aa)) folds into the Era-type G domain. Residues 11 to 18 (GRPNVGKS) form a G1 region. 11–18 (GRPNVGKS) lines the GTP pocket. Positions 37 to 41 (QTTRN) are G2. The segment at 58–61 (DTPG) is G3. GTP contacts are provided by residues 58-62 (DTPGI) and 120-123 (NKID). Residues 120-123 (NKID) form a G4 region. Residues 149–151 (IAA) form a G5 region. In terms of domain architecture, KH type-2 spans 201-278 (LRDEVPHGIA…NVKIWVKVRK (78 aa)).

It belongs to the TRAFAC class TrmE-Era-EngA-EngB-Septin-like GTPase superfamily. Era GTPase family. In terms of assembly, monomer.

The protein resides in the cytoplasm. Its subcellular location is the cell membrane. Its function is as follows. An essential GTPase that binds both GDP and GTP, with rapid nucleotide exchange. Plays a role in 16S rRNA processing and 30S ribosomal subunit biogenesis and possibly also in cell cycle regulation and energy metabolism. The chain is GTPase Era from Clostridium botulinum (strain Alaska E43 / Type E3).